Reading from the N-terminus, the 438-residue chain is Serine--tRNA ligase (438 aa).

235–237 (TAE) provides a ligand contact to L-serine. ATP is bound by residues 266–268 (RKE) and V282. E289 provides a ligand contact to L-serine. 355–358 (ELVS) is a binding site for ATP. T393 serves as a coordination point for L-serine.

Belongs to the class-II aminoacyl-tRNA synthetase family. Type-1 seryl-tRNA synthetase subfamily. As to quaternary structure, homodimer. The tRNA molecule binds across the dimer.

It carries out the reaction tRNA(Ser) + L-serine + ATP = L-seryl-tRNA(Ser) + AMP + diphosphate + H(+). The enzyme catalyses tRNA(Sec) + L-serine + ATP = L-seryl-tRNA(Sec) + AMP + diphosphate + H(+). Its pathway is aminoacyl-tRNA biosynthesis; selenocysteinyl-tRNA(Sec) biosynthesis; L-seryl-tRNA(Sec) from L-serine and tRNA(Sec): step 1/1. In terms of biological role, catalyzes the attachment of serine to tRNA(Ser). Is also able to aminoacylate tRNA(Sec) with serine, to form the misacylated tRNA L-seryl-tRNA(Sec), which will be further converted into selenocysteinyl-tRNA(Sec). The chain is Serine--tRNA ligase from Helianthus annuus (Common sunflower).